Consider the following 523-residue polypeptide: Tubulin-specific chaperone E (523 aa).

The 45-residue stretch at 31-75 (GEVSGHMGSWLGIEWDDGLRGKHNGIVDGKRYFQTQTPTGGSFIR) folds into the CAP-Gly domain. LRR repeat units lie at residues 155–180 (LTHL…IAQQ), 181–204 (LPSL…QITE), 209–232 (FRQL…MHTA), 235–258 (WPNI…DRTK), 260–284 (FKQL…KLGN), 285–310 (LTTL…DSQE), and 315–337 (FVSL…AFNE).

This sequence belongs to the TBCE family.

It is found in the cytoplasm. In terms of biological role, tubulin-folding protein which is required for the development of the neuronal microtubule network. Essential for the development and function of neuromuscular synapses. Likely to promote microtubule formation by acting in the negative regulation of the microtubule-severing protein spas. The protein is Tubulin-specific chaperone E of Drosophila melanogaster (Fruit fly).